The primary structure comprises 399 residues: Exodeoxyribonuclease 7 large subunit (399 aa).

The protein belongs to the XseA family. In terms of assembly, heterooligomer composed of large and small subunits.

The protein localises to the cytoplasm. The catalysed reaction is Exonucleolytic cleavage in either 5'- to 3'- or 3'- to 5'-direction to yield nucleoside 5'-phosphates.. Its function is as follows. Bidirectionally degrades single-stranded DNA into large acid-insoluble oligonucleotides, which are then degraded further into small acid-soluble oligonucleotides. The sequence is that of Exodeoxyribonuclease 7 large subunit from Clostridium botulinum (strain Eklund 17B / Type B).